Here is a 530-residue protein sequence, read N- to C-terminus: UDP-glucuronosyltransferase 2B15 (530 aa).

The N-terminal stretch at 1 to 23 is a signal peptide; that stretch reads MSLKWTSVFLLIQLSCYFSSGSC. A glycan (N-linked (GlcNAc...) asparagine) is linked at asparagine 65. Position 136 is an N6-succinyllysine (lysine 136). Asparagine 316 and asparagine 483 each carry an N-linked (GlcNAc...) asparagine glycan. The chain crosses the membrane as a helical span at residues 495–515; sequence IAFLLACVATVIFIITKFCLF.

It belongs to the UDP-glycosyltransferase family. In terms of tissue distribution, expressed in many tissues. Present in liver, prostate and testis.

It localises to the endoplasmic reticulum membrane. It catalyses the reaction glucuronate acceptor + UDP-alpha-D-glucuronate = acceptor beta-D-glucuronoside + UDP + H(+). The catalysed reaction is 17alpha-estradiol + UDP-alpha-D-glucuronate = 17alpha-estradiol 3-O-(beta-D-glucuronate) + UDP + H(+). It carries out the reaction 16alpha,17alpha-estriol + UDP-alpha-D-glucuronate = 16alpha,17alpha-estriol 3-O-(beta-D-glucuronate) + UDP + H(+). The enzyme catalyses 17beta-hydroxy-5alpha-androstan-3-one + UDP-alpha-D-glucuronate = 5alpha-dihydrotestosterone 17-O-(beta-D-glucuronate) + UDP + H(+). In terms of biological role, UDP-glucuronosyltransferase (UGT) that catalyzes phase II biotransformation reactions in which lipophilic substrates are conjugated with glucuronic acid to increase the metabolite's water solubility, thereby facilitating excretion into either the urine or bile. Essential for the elimination and detoxification of drugs, xenobiotics and endogenous compounds. Catalyzes the glucuronidation of endogenous steroid hormones such as androgens (testosterone, androsterone) and estrogens (estradiol, epiestradiol, estriol, catechol estrogens). Displays glucuronidation activity toward several classes of xenobiotic substrates, including phenolic compounds (eugenol, 4-nitrophenol, 4-hydroxybiphenyl) and phenylpropanoids (naringenin, coumarins). Catalyzes the glucuronidation of monoterpenoid alcohols such as borneol, menthol and isomenthol, a class of natural compounds used in essential oils. The polypeptide is UDP-glucuronosyltransferase 2B15 (Homo sapiens (Human)).